Consider the following 466-residue polypeptide: 3-isopropylmalate dehydratase large subunit (466 aa).

[4Fe-4S] cluster contacts are provided by Cys347, Cys407, and Cys410.

This sequence belongs to the aconitase/IPM isomerase family. LeuC type 1 subfamily. Heterodimer of LeuC and LeuD. Requires [4Fe-4S] cluster as cofactor.

It carries out the reaction (2R,3S)-3-isopropylmalate = (2S)-2-isopropylmalate. Its pathway is amino-acid biosynthesis; L-leucine biosynthesis; L-leucine from 3-methyl-2-oxobutanoate: step 2/4. Functionally, catalyzes the isomerization between 2-isopropylmalate and 3-isopropylmalate, via the formation of 2-isopropylmaleate. The polypeptide is 3-isopropylmalate dehydratase large subunit (Blochmanniella floridana).